The chain runs to 503 residues: Ferulic acid decarboxylase 1 (503 aa).

Positions 170, 193, and 236 each coordinate Mn(2+). Residues 170–175 (NWSIAR), 192–193 (QH), and glutamate 236 each bind prenylated FMN. Catalysis depends on glutamate 285, which acts as the Proton donor. Position 394 (lysine 394) interacts with prenylated FMN.

The protein belongs to the UbiD family. UbiD-like/FDC subfamily. Homodimer. May form higher order oligomers. Mn(2+) is required as a cofactor. Requires prenylated FMN as cofactor.

The protein localises to the cytoplasm. The catalysed reaction is (E)-4-coumarate + H(+) = 4-vinylphenol + CO2. The enzyme catalyses (E)-cinnamate + H(+) = styrene + CO2. It carries out the reaction (E)-ferulate + H(+) = 2-methoxy-4-vinylphenol + CO2. Functionally, catalyzes the reversible decarboxylation of aromatic carboxylic acids like ferulic acid, p-coumaric acid or cinnamic acid, producing the corresponding vinyl derivatives 4-vinylphenol, 4-vinylguaiacol, and styrene, respectively, which play the role of aroma metabolites. Not essential for ubiquinone synthesis. In Saccharomyces cerevisiae (strain ATCC 204508 / S288c) (Baker's yeast), this protein is Ferulic acid decarboxylase 1.